The primary structure comprises 458 residues: Translation initiation factor eIF2B subunit gamma (458 aa).

Ser291 carries the phosphoserine modification.

This sequence belongs to the eIF-2B gamma/epsilon subunits family. Component of the translation initiation factor 2B (eIF2B) complex which is a heterodecamer of two sets of five different subunits: alpha, beta, gamma, delta and epsilon. Subunits alpha, beta and delta comprise a regulatory subcomplex and subunits epsilon and gamma comprise a catalytic subcomplex. Within the complex, the hexameric regulatory complex resides at the center, with the two heterodimeric catalytic subcomplexes bound on opposite sides.

It is found in the cytoplasm. The protein resides in the cytosol. Functionally, acts as a component of the translation initiation factor 2B (eIF2B) complex, which catalyzes the exchange of GDP for GTP on the eukaryotic initiation factor 2 (eIF2) complex gamma subunit. Its guanine nucleotide exchange factor activity is repressed when bound to eIF2 complex phosphorylated on the alpha subunit, thereby limiting the amount of methionyl-initiator methionine tRNA available to the ribosome and consequently global translation is repressed. The polypeptide is Translation initiation factor eIF2B subunit gamma (tif223) (Schizosaccharomyces pombe (strain 972 / ATCC 24843) (Fission yeast)).